Here is a 566-residue protein sequence, read N- to C-terminus: SRSF protein kinase 3 (566 aa).

Residues 1–13 are compositionally biased toward gly residues; sequence MSASTGGGGGGDS. Residues 1–60 are disordered; sequence MSASTGGGGGGDSGSSSSSSSQASCGPEPSGSELAPPTPAPRMLQGLLGSDDEEQEDPKD. Residues 14-26 show a composition bias toward low complexity; the sequence is GSSSSSSSQASCG. Ser-50 carries the phosphoserine modification. The Protein kinase domain maps to 79–564; it reads YHVVRKLGWG…AADCLQHPWL (486 aa). Residues 85–93 and Lys-108 contribute to the ATP site; that span reads LGWGHFSTV. The Proton acceptor role is filled by Asp-212. The segment covering 236–254 has biased composition (polar residues); that stretch reads EWQQSGAPPPSRSTVSTAP. 2 disordered regions span residues 236 to 283 and 295 to 353; these read EWQQ…LLEE and EAAA…SGFS. Positions 263–278 are enriched in basic residues; sequence SKNKRKKMRRKRKQQK. Residue Ser-329 is modified to Phosphoserine. Over residues 330–339 the composition is skewed to low complexity; sequence PASSSPAPGG. Polar residues predominate over residues 344–353; the sequence is SPGSQTSGFS.

This sequence belongs to the protein kinase superfamily. As to expression, highly expressed in skeletal muscle, heart, uterus and parorchis. Weakly expressed in brain, stomach, small intestine and ovary.

It localises to the nucleus. It is found in the cytoplasm. The catalysed reaction is L-seryl-[protein] + ATP = O-phospho-L-seryl-[protein] + ADP + H(+). The enzyme catalyses L-threonyl-[protein] + ATP = O-phospho-L-threonyl-[protein] + ADP + H(+). In terms of biological role, serine/arginine-rich protein-specific kinase which specifically phosphorylates its substrates at serine residues located in regions rich in arginine/serine dipeptides, known as RS domains. Phosphorylates the SR splicing factor SRSF1 and the lamin-B receptor (LBR) in vitro. Required for normal muscle development. The protein is SRSF protein kinase 3 (SRPK3) of Sus scrofa (Pig).